A 408-amino-acid chain; its full sequence is Lipoate--protein ligase 1 (408 aa).

A mitochondrion-targeting transit peptide spans 1–18 (MKRIFRLVRRCHYSTEKR). The BPL/LPL catalytic domain occupies 60 to 242 (KFNEPILFLW…EFTKFYEQNY (183 aa)). Residues R102, G107, and Y110 each coordinate ATP. G107 is a binding site for (R)-lipoate. Mg(2+) is bound at residue D153. An ATP-binding site is contributed by K160. (R)-lipoate is bound at residue K160.

Belongs to the LplA family.

It localises to the mitochondrion. The enzyme catalyses L-lysyl-[lipoyl-carrier protein] + (R)-lipoate + ATP = N(6)-[(R)-lipoyl]-L-lysyl-[lipoyl-carrier protein] + AMP + diphosphate + H(+). It carries out the reaction (R)-dihydrolipoate + L-lysyl-[lipoyl-carrier protein] + ATP = N(6)-[(R)-dihydrolipoyl]-L-lysyl-[lipoyl-carrier protein] + AMP + diphosphate + H(+). The catalysed reaction is (R)-dihydrolipoate + ATP + H(+) = N(6)-[(R)-dihydrolipoyl]-5'-AMP + diphosphate. It catalyses the reaction N(6)-[(R)-dihydrolipoyl]-5'-AMP + L-lysyl-[lipoyl-carrier protein] = N(6)-[(R)-dihydrolipoyl]-L-lysyl-[lipoyl-carrier protein] + AMP + 2 H(+). Its pathway is protein modification; protein lipoylation via exogenous pathway; protein N(6)-(lipoyl)lysine from lipoate: step 1/2. It participates in protein modification; protein lipoylation via exogenous pathway; protein N(6)-(lipoyl)lysine from lipoate: step 2/2. With respect to regulation, inhibited by the lipoate analog 8-bromo-octanoate (BrO). Catalytic activity is increased in the presence of Mg(2+). Functionally, catalyzes both the ATP-dependent activation of exogenously supplied lipoate to lipoyl-AMP and the transfer of the activated lipoyl onto the lipoyl domains of lipoate-dependent enzymes. In the mitochondrion, functions as a redox switch between two lipoylation routes. Senses the oxidation state of lipoate and determines which downstream enzymes will be lipoylated. In low reducing conditions, uses lipoate in its oxidized ring form to lipoylate glycine cleavage system H-protein GCVH. In high reducing conditions and together with LipL2, uses reduced lipoate (dihydrolipoate) to lipoylate the E2 component of the branched chain alpha-ketoacid dehydrogenase complex BCKDH-E2/BCDH and the E2 component of the alpha-ketoglutarate dehydrogenase complex KDH. LipL1 is responsible for catalysing the activation of lipoate, forming lipoyl-AMP while LipL2 is required but is not capable of catalyzing this reaction. This is Lipoate--protein ligase 1 from Plasmodium falciparum (isolate 3D7).